A 296-amino-acid chain; its full sequence is Chronophin (296 aa).

D25 acts as the Nucleophile in catalysis. The Mg(2+) site is built by D25 and D27. D27 serves as the catalytic Proton donor. Substrate contacts are provided by residues 58 to 60 (SNN), H182, and K213. D238 contacts Mg(2+).

This sequence belongs to the HAD-like hydrolase superfamily. In terms of assembly, homodimer. The cofactor is Mg(2+). Ubiquitously expressed (at protein level). Highly expressed in all the regions of central nerve system except the spinal cord. Also expressed at high level in liver and testis. In fetus, it is weakly expressed in all organs except brain.

It localises to the cytoplasm. The protein resides in the cytosol. Its subcellular location is the cytoskeleton. It is found in the cell projection. The protein localises to the ruffle membrane. It localises to the lamellipodium membrane. The protein resides in the cell membrane. The catalysed reaction is pyridoxal 5'-phosphate + H2O = pyridoxal + phosphate. It catalyses the reaction pyridoxine 5'-phosphate + H2O = pyridoxine + phosphate. The enzyme catalyses pyridoxamine + phosphate = pyridoxamine 5'-phosphate + H2O. It carries out the reaction O-phospho-L-seryl-[protein] + H2O = L-seryl-[protein] + phosphate. With respect to regulation, inhibited by NaF, Zn(2+), Ca(2+), Mn(2+) and EDTA. Functions as a pyridoxal phosphate (PLP) phosphatase, which also catalyzes the dephosphorylation of pyridoxine 5'-phosphate (PNP) and pyridoxamine 5'-phosphate (PMP), with order of substrate preference PLP &gt; PNP &gt; PMP and therefore plays a role in vitamin B6 metabolism. Also functions as a protein serine phosphatase that specifically dephosphorylates 'Ser-3' in proteins of the actin-depolymerizing factor (ADF)/cofilin family like CFL1 and DSTN. Thereby, regulates cofilin-dependent actin cytoskeleton reorganization, being required for normal progress through mitosis and normal cytokinesis. Does not dephosphorylate phosphothreonines in LIMK1. Does not dephosphorylate peptides containing phosphotyrosine. The chain is Chronophin from Homo sapiens (Human).